The primary structure comprises 315 residues: Glycine--tRNA ligase alpha subunit (315 aa).

The protein belongs to the class-II aminoacyl-tRNA synthetase family. As to quaternary structure, tetramer of two alpha and two beta subunits.

It localises to the cytoplasm. The enzyme catalyses tRNA(Gly) + glycine + ATP = glycyl-tRNA(Gly) + AMP + diphosphate. This chain is Glycine--tRNA ligase alpha subunit, found in Pseudomonas putida (strain GB-1).